Consider the following 566-residue polypeptide: Arginine--tRNA ligase (566 aa).

A 'HIGH' region motif is present at residues 121–131 (PNIAKPMSMGH).

This sequence belongs to the class-I aminoacyl-tRNA synthetase family. As to quaternary structure, monomer.

The protein localises to the cytoplasm. It catalyses the reaction tRNA(Arg) + L-arginine + ATP = L-arginyl-tRNA(Arg) + AMP + diphosphate. This Oenococcus oeni (strain ATCC BAA-331 / PSU-1) protein is Arginine--tRNA ligase.